Here is a 734-residue protein sequence, read N- to C-terminus: Photosystem I P700 chlorophyll a apoprotein A2 (734 aa).

The next 8 helical transmembrane spans lie at 46–69, 135–158, 175–199, 273–291, 330–353, 369–395, 417–439, and 517–535; these read IFAS…FHVA, LYTG…LHLQ, LNHH…HVAI, MAHH…GHMY, IHFQ…QHMY, AALY…IFFI, AIIS…LYVH, and FLVH…LILV. [4Fe-4S] cluster is bound by residues Cys559 and Cys568. Helical transmembrane passes span 575–596 and 643–665; these read AFYL…YWHW and LSVW…MFLI. The chlorophyll a site is built by His654, Met662, and Tyr670. Trp671 serves as a coordination point for phylloquinone. The helical transmembrane segment at 707–727 threads the bilayer; it reads LVGLAHFSVGYIFTYAAFLIA.

Belongs to the PsaA/PsaB family. As to quaternary structure, the PsaA/B heterodimer binds the P700 chlorophyll special pair and subsequent electron acceptors. PSI consists of a core antenna complex that captures photons, and an electron transfer chain that converts photonic excitation into a charge separation. The eukaryotic PSI reaction center is composed of at least 11 subunits. Requires P700 is a chlorophyll a/chlorophyll a' dimer, A0 is one or more chlorophyll a, A1 is one or both phylloquinones and FX is a shared 4Fe-4S iron-sulfur center. as cofactor.

The protein localises to the plastid. It localises to the chloroplast thylakoid membrane. The enzyme catalyses reduced [plastocyanin] + hnu + oxidized [2Fe-2S]-[ferredoxin] = oxidized [plastocyanin] + reduced [2Fe-2S]-[ferredoxin]. In terms of biological role, psaA and PsaB bind P700, the primary electron donor of photosystem I (PSI), as well as the electron acceptors A0, A1 and FX. PSI is a plastocyanin-ferredoxin oxidoreductase, converting photonic excitation into a charge separation, which transfers an electron from the donor P700 chlorophyll pair to the spectroscopically characterized acceptors A0, A1, FX, FA and FB in turn. Oxidized P700 is reduced on the lumenal side of the thylakoid membrane by plastocyanin. The chain is Photosystem I P700 chlorophyll a apoprotein A2 from Lobularia maritima (Sweet alyssum).